Here is a 67-residue protein sequence, read N- to C-terminus: Phycobilisome 7.8 kDa linker polypeptide, allophycocyanin-associated, core (67 aa).

In terms of domain architecture, CpcD-like spans Met-1 to Phe-56.

Belongs to the phycobilisome linker protein family.

It localises to the cellular thylakoid membrane. Rod linker protein, associated with allophycocyanin. Linker polypeptides determine the state of aggregation and the location of the disk-shaped phycobiliprotein units within the phycobilisome and modulate their spectroscopic properties in order to mediate a directed and optimal energy transfer. The protein is Phycobilisome 7.8 kDa linker polypeptide, allophycocyanin-associated, core (apcC) of Thermosynechococcus vestitus (strain NIES-2133 / IAM M-273 / BP-1).